The chain runs to 334 residues: RNA polymerase sigma factor RpoS (334 aa).

The segment at 21–50 (PGIMLDESSADEQPSPRATPKATTSFSSKQ) is disordered. A sigma-70 factor domain-1 region spans residues 61-94 (DATQLYLNEIGFSPLLTPEEEVHFARLAQKGDPA). The tract at residues 99–169 (MIESNLRLVV…ERAIMNQTRT (71 aa)) is sigma-70 factor domain-2. An Interaction with polymerase core subunit RpoC motif is present at residues 123–126 (DLIE). A sigma-70 factor domain-3 region spans residues 179-254 (ELNVYLRAAR…DDRPTDPCEL (76 aa)). Residues 267 to 320 (WLTELTDKQREVVIRRFGLRGHESSTLEEVGQEIGLTRERVRQIQVEALKRLRE) are sigma-70 factor domain-4. Positions 293 to 312 (LEEVGQEIGLTRERVRQIQV) form a DNA-binding region, H-T-H motif.

It belongs to the sigma-70 factor family. RpoS subfamily. Interacts with the RNA polymerase core enzyme.

It localises to the cytoplasm. Functionally, sigma factors are initiation factors that promote the attachment of RNA polymerase to specific initiation sites and are then released. This sigma factor is the master transcriptional regulator of the stationary phase and the general stress response. The polypeptide is RNA polymerase sigma factor RpoS (Pseudomonas aeruginosa (strain ATCC 15692 / DSM 22644 / CIP 104116 / JCM 14847 / LMG 12228 / 1C / PRS 101 / PAO1)).